Here is a 191-residue protein sequence, read N- to C-terminus: UPF0312 protein PSPA7_0523 (191 aa).

Residues 1–23 (MLKKTLAALALGSALFTAGQAMA) form the signal peptide.

This sequence belongs to the UPF0312 family. Type 1 subfamily.

It localises to the periplasm. The protein is UPF0312 protein PSPA7_0523 of Pseudomonas paraeruginosa (strain DSM 24068 / PA7) (Pseudomonas aeruginosa (strain PA7)).